The following is a 316-amino-acid chain: Methionyl-tRNA formyltransferase (316 aa).

A (6S)-5,6,7,8-tetrahydrofolate-binding site is contributed by 111 to 114 (GLLP).

This sequence belongs to the Fmt family.

The catalysed reaction is L-methionyl-tRNA(fMet) + (6R)-10-formyltetrahydrofolate = N-formyl-L-methionyl-tRNA(fMet) + (6S)-5,6,7,8-tetrahydrofolate + H(+). Attaches a formyl group to the free amino group of methionyl-tRNA(fMet). The formyl group appears to play a dual role in the initiator identity of N-formylmethionyl-tRNA by promoting its recognition by IF2 and preventing the misappropriation of this tRNA by the elongation apparatus. This Chlamydia trachomatis serovar A (strain ATCC VR-571B / DSM 19440 / HAR-13) protein is Methionyl-tRNA formyltransferase.